Here is a 78-residue protein sequence, read N- to C-terminus: Large ribosomal subunit protein bL28 (78 aa).

Belongs to the bacterial ribosomal protein bL28 family.

The protein is Large ribosomal subunit protein bL28 of Synechococcus sp. (strain ATCC 27144 / PCC 6301 / SAUG 1402/1) (Anacystis nidulans).